We begin with the raw amino-acid sequence, 1005 residues long: Vacuolar membrane protease (1005 aa).

Residues 1–14 (MAKETTARSILGYQ) are Cytoplasmic-facing. The chain crosses the membrane as a helical span at residues 15–35 (TLPTTALIALIYVVAFFSVLV). Residues 36–353 (SDQLPSIPHP…PEDSAKQKSK (318 aa)) are Vacuolar-facing. A glycan (N-linked (GlcNAc...) asparagine) is linked at N107. Zn(2+)-binding residues include H152 and D164. E196 acts as the Proton acceptor in catalysis. Residue E197 participates in Zn(2+) binding. Residue N213 is glycosylated (N-linked (GlcNAc...) asparagine). Zn(2+) is bound by residues E222 and H311. A helical transmembrane segment spans residues 354 to 374 (PGVYFDRPVVLALLWAIGAVL). Over 375–448 (KHNAGSPPPP…LITVWKQASF (74 aa)) the chain is Cytoplasmic. The segment at 379–420 (GSPPPPPKPTVPHSANNASAGTGRPGASTRQPTRSFGSNEDA) is disordered. Residues 406–419 (STRQPTRSFGSNED) show a composition bias toward polar residues. Residues 449–469 (WIALIVTVGLQALLAWGYVAI) traverse the membrane as a helical segment. Residues 470–479 (NPFTIYSRPY) are Vacuolar-facing. The chain crosses the membrane as a helical span at residues 480 to 500 (FVLLSFFALSFFSMTLVLQAA). Residues 501-519 (FPSSPVKHAIEVREQEKTT) lie on the Cytoplasmic side of the membrane. A helical membrane pass occupies residues 520 to 540 (ILLHLHLLSWIALLLSTILIG). Residues 541–543 (KSQ) are Vacuolar-facing. Residues 544-564 (VGSFYVVTVWYLGIWAATVIG) form a helical membrane-spanning segment. The Cytoplasmic segment spans residues 565–644 (TLQPILVSKR…RKTNSKSKED (80 aa)). The segment at 577–640 (DKGKRRARRS…ASNRRKTNSK (64 aa)) is disordered. The segment covering 588–606 (SASTSSSSSSSSSSSSGSD) has biased composition (low complexity). The chain crosses the membrane as a helical span at residues 645–665 (GAIGWWIAQVLLTVPPVVMLV). The Vacuolar portion of the chain corresponds to 666–686 (GQITSIVLEAMNQTLTDGNSA). The N-linked (GlcNAc...) asparagine glycan is linked to N677. Residues 687–707 (WSIYLLTALLATMLVLPVAPF) traverse the membrane as a helical segment. The Cytoplasmic segment spans residues 708-713 (SPKLHR). A helical membrane pass occupies residues 714-734 (GLIFLSAAVFVGFTIYLWVVF). Over 735–1005 (PFTRQDPFKV…VEASAPFTVV (271 aa)) the chain is Vacuolar. N-linked (GlcNAc...) asparagine glycans are attached at residues N761 and N961.

It belongs to the peptidase M28 family. Requires Zn(2+) as cofactor.

It localises to the vacuole membrane. In terms of biological role, may be involved in vacuolar sorting and osmoregulation. The polypeptide is Vacuolar membrane protease (Coprinopsis cinerea (strain Okayama-7 / 130 / ATCC MYA-4618 / FGSC 9003) (Inky cap fungus)).